The chain runs to 225 residues: C-reactive protein (225 aa).

An N-terminal signal peptide occupies residues 1-18 (MLVVFLCLLSVTLEATEG). The Pentraxin (PTX) domain maps to 23-225 (SGKVLQFKTA…TGNVLVATDN (203 aa)). The cysteines at positions 54 and 116 are disulfide-linked. Residues aspartate 78, aspartate 157, proline 158, aspartate 159, and glutamine 169 each contribute to the Ca(2+) site.

Belongs to the pentraxin family. Homotrimer. It depends on Ca(2+) as a cofactor.

The protein localises to the secreted. Its function is as follows. Displays several functions associated with host defense: it promotes agglutination, bacterial capsular swelling, phagocytosis, and complement fixation through its calcium-dependent binding to phosphorylcholine. The polypeptide is C-reactive protein (Danio rerio (Zebrafish)).